The primary structure comprises 245 residues: Aliphatic sulfonates import ATP-binding protein SsuB (245 aa).

The ABC transporter domain maps to 6 to 225 (VTVRGLRRAF…SRGDEGFDDL (220 aa)). ATP is bound at residue 38 to 45 (GLSGSGKS).

The protein belongs to the ABC transporter superfamily. Aliphatic sulfonates importer (TC 3.A.1.17.2) family. In terms of assembly, the complex is composed of two ATP-binding proteins (SsuB), two transmembrane proteins (SsuC) and a solute-binding protein (SsuA).

It localises to the cell membrane. It carries out the reaction ATP + H2O + aliphatic sulfonate-[sulfonate-binding protein]Side 1 = ADP + phosphate + aliphatic sulfonateSide 2 + [sulfonate-binding protein]Side 1.. In terms of biological role, part of the ABC transporter complex SsuABC involved in aliphatic sulfonates import. Responsible for energy coupling to the transport system. This is Aliphatic sulfonates import ATP-binding protein SsuB from Mycobacterium sp. (strain MCS).